The following is a 330-amino-acid chain: Malate dehydrogenase (330 aa).

Glycine 13–glycine 19 contacts NAD(+). Residues arginine 94 and arginine 100 each coordinate substrate. Residues asparagine 107, glutamine 114, and valine 131 to asparagine 133 each bind NAD(+). Positions 133 and 164 each coordinate substrate. The active-site Proton acceptor is histidine 189.

Belongs to the LDH/MDH superfamily. MDH type 2 family.

It carries out the reaction (S)-malate + NAD(+) = oxaloacetate + NADH + H(+). Catalyzes the reversible oxidation of malate to oxaloacetate. The protein is Malate dehydrogenase of Deinococcus deserti (strain DSM 17065 / CIP 109153 / LMG 22923 / VCD115).